The following is a 380-amino-acid chain: Cytochrome b (380 aa).

The next 4 helical transmembrane spans lie at 34-54, 78-99, 114-134, and 179-199; these read FGSLLGLCLVTQILTGLLLAT, WLIRNLHANGASFFFICIYLHI, WNTGILLLLTLMATAFVGYVL, and FFALHFLLPFMIAGLTLIHLT. Residues histidine 84 and histidine 98 each contribute to the heme b site. Heme b-binding residues include histidine 183 and histidine 197. A ubiquinone is bound at residue histidine 202. The next 4 membrane-spanning stretches (helical) occupy residues 227–247, 289–309, 321–341, and 348–368; these read LKDTLGFMFMLFLLTTLALFS, LGGVLALAASVLILFLSPLLH, FSQFLFWLLIANLLILTWVGS, and FIIIGQLASLTYFTILLILLP.

This sequence belongs to the cytochrome b family. In terms of assembly, the cytochrome bc1 complex contains 11 subunits: 3 respiratory subunits (MT-CYB, CYC1 and UQCRFS1), 2 core proteins (UQCRC1 and UQCRC2) and 6 low-molecular weight proteins (UQCRH/QCR6, UQCRB/QCR7, UQCRQ/QCR8, UQCR10/QCR9, UQCR11/QCR10 and a cleavage product of UQCRFS1). This cytochrome bc1 complex then forms a dimer. It depends on heme b as a cofactor.

It localises to the mitochondrion inner membrane. Its function is as follows. Component of the ubiquinol-cytochrome c reductase complex (complex III or cytochrome b-c1 complex) that is part of the mitochondrial respiratory chain. The b-c1 complex mediates electron transfer from ubiquinol to cytochrome c. Contributes to the generation of a proton gradient across the mitochondrial membrane that is then used for ATP synthesis. The polypeptide is Cytochrome b (MT-CYB) (Garrodia nereis (Grey-backed storm-petrel)).